Consider the following 200-residue polypeptide: LexA repressor (200 aa).

Residues 28–48 (RAEIAQHFGFSSPNAAEQHLK) constitute a DNA-binding region (H-T-H motif). Active-site for autocatalytic cleavage activity residues include serine 117 and lysine 154.

Belongs to the peptidase S24 family. Homodimer.

It carries out the reaction Hydrolysis of Ala-|-Gly bond in repressor LexA.. Its function is as follows. Represses a number of genes involved in the response to DNA damage (SOS response), including recA and lexA. In the presence of single-stranded DNA, RecA interacts with LexA causing an autocatalytic cleavage which disrupts the DNA-binding part of LexA, leading to derepression of the SOS regulon and eventually DNA repair. The chain is LexA repressor from Thiobacillus denitrificans (strain ATCC 25259 / T1).